A 66-amino-acid chain; its full sequence is Scarabaecin (66 aa).

The first 26 residues, 1–26, serve as a signal peptide directing secretion; sequence MKTLTFYTLLLCAALYSNFFDCKAVA. The cysteines at positions 46 and 57 are disulfide-linked.

Its subcellular location is the secreted. Its function is as follows. Possesses antifungal activity against phytopathogenic fungi such as P.oryzae, R.solani and B.cinerea but not against phytopathogenic bacteria. Shows weak activity against the insect pathogenic fungus B.bassiana and against S.aureus. Binds chitin. The sequence is that of Scarabaecin from Oryctes rhinoceros (Coconut rhinoceros beetle).